Reading from the N-terminus, the 911-residue chain is Protein translocase subunit SecA (911 aa).

ATP is bound by residues Q87, 105 to 109 (GEGKT), and D499. Residues C895, C897, C906, and H907 each contribute to the Zn(2+) site.

It belongs to the SecA family. As to quaternary structure, monomer and homodimer. Part of the essential Sec protein translocation apparatus which comprises SecA, SecYEG and auxiliary proteins SecDF-YajC and YidC. Zn(2+) serves as cofactor.

It localises to the cell inner membrane. It is found in the cytoplasm. The enzyme catalyses ATP + H2O + cellular proteinSide 1 = ADP + phosphate + cellular proteinSide 2.. In terms of biological role, part of the Sec protein translocase complex. Interacts with the SecYEG preprotein conducting channel. Has a central role in coupling the hydrolysis of ATP to the transfer of proteins into and across the cell membrane, serving both as a receptor for the preprotein-SecB complex and as an ATP-driven molecular motor driving the stepwise translocation of polypeptide chains across the membrane. The polypeptide is Protein translocase subunit SecA (Novosphingobium aromaticivorans (strain ATCC 700278 / DSM 12444 / CCUG 56034 / CIP 105152 / NBRC 16084 / F199)).